We begin with the raw amino-acid sequence, 234 residues long: uncharacterized protein (234 aa).

Helical transmembrane passes span 22–42, 59–79, 154–174, and 186–206; these read TFLN…IPLI, INWA…AYLI, FWIF…IFFC, and LLSL…IFAL.

It is found in the cell membrane. This is an uncharacterized protein from Escherichia coli (strain K12).